Consider the following 94-residue polypeptide: Progonadoliberin-3 (94 aa).

Positions 1–23 (MEGKGRVLVQLLMLACVLEVSLC) are cleaved as a signal peptide. Gln24 carries the pyrrolidone carboxylic acid modification. Gly33 is modified (glycine amide).

The protein belongs to the GnRH family.

Its subcellular location is the secreted. Stimulates the secretion of gonadotropins. The protein is Progonadoliberin-3 (gnrh3) of Carassius auratus (Goldfish).